The sequence spans 330 residues: WRKY transcription factor WRKY51 (330 aa).

The disordered stretch occupies residues 39–61 (QTGTSERSPAPAPAQEQQQQQQV). Residues 51-60 (PAQEQQQQQQ) are compositionally biased toward low complexity. Positions 74–81 (FKKVISML) match the Nuclear localization signal motif. 2 disordered regions span residues 91 to 117 (RGPV…SAVS) and 302 to 330 (YEGE…LPLA). Over residues 101 to 117 (PAASEPAPVRSSPSAVS) the composition is skewed to low complexity. A DNA-binding region (WRKY) is located at residues 245–311 (KVADIPADDF…YEGEHRHTPS (67 aa)). Over residues 318 to 330 (PPAPPPPLALPLA) the composition is skewed to pro residues.

The protein belongs to the WRKY group II-a family. In terms of tissue distribution, highly expressed in aleurone cells. In seeds, predominantly present in the plumule, radicle and scutellum of the embryo.

It localises to the nucleus. In terms of biological role, transcription factor. Interacts, when in complex with WRKY71, specifically with the W box (5'-(T)TGAC[CT]-3'), a frequently occurring elicitor-responsive cis-acting element. Represses specifically gibberellic acid (GA)-induced promoters in aleurone cells, probably by interfering with GAM1. This Oryza sativa subsp. indica (Rice) protein is WRKY transcription factor WRKY51.